We begin with the raw amino-acid sequence, 511 residues long: RNA-splicing ligase RtcB homolog (511 aa).

5 residues coordinate Mn(2+): Asp-125, Cys-128, His-233, His-265, and His-359. 232–236 lines the GMP pocket; it reads NHYAE. GMP contacts are provided by residues 359-360, 408-411, Ser-415, 434-437, and Lys-510; these read HN, GGTM, and HGAG. The active-site GMP-histidine intermediate is His-434.

Belongs to the RtcB family. Catalytic component of the tRNA-splicing ligase complex. The cofactor is Mn(2+).

It carries out the reaction a 3'-end 3'-phospho-ribonucleotide-RNA + a 5'-end dephospho-ribonucleoside-RNA + GTP = a ribonucleotidyl-ribonucleotide-RNA + GMP + diphosphate. The enzyme catalyses a 3'-end 2',3'-cyclophospho-ribonucleotide-RNA + a 5'-end dephospho-ribonucleoside-RNA + GTP + H2O = a ribonucleotidyl-ribonucleotide-RNA + GMP + diphosphate + H(+). Its function is as follows. Catalytic subunit of the tRNA-splicing ligase complex that acts by directly joining spliced tRNA halves to mature-sized tRNAs by incorporating the precursor-derived splice junction phosphate into the mature tRNA as a canonical 3',5'-phosphodiester. May act as an RNA ligase with broad substrate specificity, and may function toward other RNAs. The polypeptide is RNA-splicing ligase RtcB homolog (Plasmodium knowlesi (strain H)).